Consider the following 260-residue polypeptide: Small ribosomal subunit protein uS2 (260 aa).

The tract at residues 223-260 (EGRQGEDEEEASQEVAEGVSKDSLEDLKKSVEEGSNEE) is disordered. Positions 241–254 (VSKDSLEDLKKSVE) are enriched in basic and acidic residues.

Belongs to the universal ribosomal protein uS2 family.

The protein is Small ribosomal subunit protein uS2 of Pediococcus pentosaceus (strain ATCC 25745 / CCUG 21536 / LMG 10740 / 183-1w).